We begin with the raw amino-acid sequence, 300 residues long: Bifunctional protein FolD (300 aa).

NADP(+) is bound by residues 169-171 (GRG), Ser-196, and Ile-237.

This sequence belongs to the tetrahydrofolate dehydrogenase/cyclohydrolase family. Homodimer.

It catalyses the reaction (6R)-5,10-methylene-5,6,7,8-tetrahydrofolate + NADP(+) = (6R)-5,10-methenyltetrahydrofolate + NADPH. The enzyme catalyses (6R)-5,10-methenyltetrahydrofolate + H2O = (6R)-10-formyltetrahydrofolate + H(+). Its pathway is one-carbon metabolism; tetrahydrofolate interconversion. Functionally, catalyzes the oxidation of 5,10-methylenetetrahydrofolate to 5,10-methenyltetrahydrofolate and then the hydrolysis of 5,10-methenyltetrahydrofolate to 10-formyltetrahydrofolate. The polypeptide is Bifunctional protein FolD (Clavibacter sepedonicus (Clavibacter michiganensis subsp. sepedonicus)).